The following is a 114-amino-acid chain: Phosphoribosyl-AMP cyclohydrolase (114 aa).

Residue Asp-76 coordinates Mg(2+). Cys-77 lines the Zn(2+) pocket. Mg(2+) contacts are provided by Asp-78 and Asp-80. Zn(2+) is bound by residues Cys-93 and Cys-100.

Belongs to the PRA-CH family. In terms of assembly, homodimer. The cofactor is Mg(2+). Requires Zn(2+) as cofactor.

It localises to the cytoplasm. The catalysed reaction is 1-(5-phospho-beta-D-ribosyl)-5'-AMP + H2O = 1-(5-phospho-beta-D-ribosyl)-5-[(5-phospho-beta-D-ribosylamino)methylideneamino]imidazole-4-carboxamide. Its pathway is amino-acid biosynthesis; L-histidine biosynthesis; L-histidine from 5-phospho-alpha-D-ribose 1-diphosphate: step 3/9. Its function is as follows. Catalyzes the hydrolysis of the adenine ring of phosphoribosyl-AMP. The polypeptide is Phosphoribosyl-AMP cyclohydrolase (Streptococcus sanguinis (strain SK36)).